A 513-amino-acid chain; its full sequence is 2,3-bisphosphoglycerate-independent phosphoglycerate mutase (513 aa).

Mn(2+) is bound by residues Asp12 and Ser62. Ser62 functions as the Phosphoserine intermediate in the catalytic mechanism. Substrate-binding positions include His123, 153–154 (RD), Arg185, Arg191, 260–263 (RPDR), and Lys333. Residues Asp400, His404, Asp441, His442, and His460 each coordinate Mn(2+).

The protein belongs to the BPG-independent phosphoglycerate mutase family. As to quaternary structure, monomer. Mn(2+) serves as cofactor.

It catalyses the reaction (2R)-2-phosphoglycerate = (2R)-3-phosphoglycerate. It participates in carbohydrate degradation; glycolysis; pyruvate from D-glyceraldehyde 3-phosphate: step 3/5. In terms of biological role, catalyzes the interconversion of 2-phosphoglycerate and 3-phosphoglycerate. The chain is 2,3-bisphosphoglycerate-independent phosphoglycerate mutase from Clostridium tetani (strain Massachusetts / E88).